Consider the following 248-residue polypeptide: MANVSMRDMLEAGVHFGHQTRYWNPKMAPYIFGQRNKIHIINLEKTLPLYQEAMNYVGRLAAEGGKVLFVGTKRSARKAVREEASRCGMPYVDHRWLGGMLTNFRTVKGSIRRLKDLEAQAEDGTFDKLTKREALSLSREMEKLNRTLSGIKDMNGLPDAMFVIDVGFEHIAVQEARKLGIPVVAVVDTNNSPREVDYVIPGNDDAIRAIQLYLSGAADAVLEAKTATARPGGDDDFVEVDEATEQQG.

This sequence belongs to the universal ribosomal protein uS2 family.

In Alkalilimnicola ehrlichii (strain ATCC BAA-1101 / DSM 17681 / MLHE-1), this protein is Small ribosomal subunit protein uS2.